Here is a 400-residue protein sequence, read N- to C-terminus: Enoyl-[acyl-carrier-protein] reductase [NADH] 2 (400 aa).

NAD(+) contacts are provided by residues 48 to 53 (GASSGF), 75 to 76 (FE), 112 to 113 (DA), and 141 to 142 (LA). Y228 is a substrate binding site. The Proton donor role is filled by Y238. NAD(+)-binding positions include K247 and 276–278 (LVT).

This sequence belongs to the TER reductase family. In terms of assembly, monomer.

It carries out the reaction a 2,3-saturated acyl-[ACP] + NAD(+) = a (2E)-enoyl-[ACP] + NADH + H(+). Its pathway is lipid metabolism; fatty acid biosynthesis. Its function is as follows. Involved in the final reduction of the elongation cycle of fatty acid synthesis (FAS II). Catalyzes the reduction of a carbon-carbon double bond in an enoyl moiety that is covalently linked to an acyl carrier protein (ACP). The chain is Enoyl-[acyl-carrier-protein] reductase [NADH] 2 from Vibrio vulnificus (strain CMCP6).